We begin with the raw amino-acid sequence, 209 residues long: Uracil phosphoribosyltransferase (209 aa).

5-phospho-alpha-D-ribose 1-diphosphate is bound by residues Arg79, Arg104, and 131–139 (DPMLATGGS). Residues Ile194 and 199–201 (GDA) contribute to the uracil site. Asp200 contacts 5-phospho-alpha-D-ribose 1-diphosphate.

The protein belongs to the UPRTase family. Mg(2+) is required as a cofactor.

The enzyme catalyses UMP + diphosphate = 5-phospho-alpha-D-ribose 1-diphosphate + uracil. It participates in pyrimidine metabolism; UMP biosynthesis via salvage pathway; UMP from uracil: step 1/1. Its activity is regulated as follows. Allosterically activated by GTP. Its function is as follows. Catalyzes the conversion of uracil and 5-phospho-alpha-D-ribose 1-diphosphate (PRPP) to UMP and diphosphate. The chain is Uracil phosphoribosyltransferase from Streptococcus pneumoniae (strain ATCC BAA-255 / R6).